A 514-amino-acid chain; its full sequence is Type-2 serine--tRNA ligase (514 aa).

Ala-313 is a binding site for L-serine. Cys-315 contacts Zn(2+). Arg-344 serves as a coordination point for L-serine. ATP-binding positions include 344-346 (RWE) and 355-356 (RV). An L-serine-binding site is contributed by 361–363 (RGE). Zn(2+)-binding residues include Glu-363 and Cys-470. An ATP-binding site is contributed by Arg-477.

Belongs to the class-II aminoacyl-tRNA synthetase family. Type-2 seryl-tRNA synthetase subfamily. Homodimer. It depends on Zn(2+) as a cofactor.

It localises to the cytoplasm. The enzyme catalyses tRNA(Ser) + L-serine + ATP = L-seryl-tRNA(Ser) + AMP + diphosphate + H(+). It catalyses the reaction tRNA(Sec) + L-serine + ATP = L-seryl-tRNA(Sec) + AMP + diphosphate + H(+). Its pathway is aminoacyl-tRNA biosynthesis; selenocysteinyl-tRNA(Sec) biosynthesis; L-seryl-tRNA(Sec) from L-serine and tRNA(Sec): step 1/1. In terms of biological role, catalyzes the attachment of serine to tRNA(Ser). Is also able to aminoacylate tRNA(Sec) with serine, to form the misacylated tRNA L-seryl-tRNA(Sec), which will be further converted into selenocysteinyl-tRNA(Sec). The sequence is that of Type-2 serine--tRNA ligase (serS) from Methanococcus maripaludis (strain DSM 14266 / JCM 13030 / NBRC 101832 / S2 / LL).